The chain runs to 875 residues: Alanine--tRNA ligase (875 aa).

Positions 564, 568, 666, and 670 each coordinate Zn(2+).

This sequence belongs to the class-II aminoacyl-tRNA synthetase family. Homotetramer. The cofactor is Zn(2+).

It is found in the cytoplasm. The catalysed reaction is tRNA(Ala) + L-alanine + ATP = L-alanyl-tRNA(Ala) + AMP + diphosphate. In terms of biological role, catalyzes the attachment of alanine to tRNA(Ala) in a two-step reaction: alanine is first activated by ATP to form Ala-AMP and then transferred to the acceptor end of tRNA(Ala). Also edits incorrectly charged Ser-tRNA(Ala) and Gly-tRNA(Ala) via its editing domain. The polypeptide is Alanine--tRNA ligase (Serratia proteamaculans (strain 568)).